Consider the following 497-residue polypeptide: Signal recognition particle subunit SRP54 2 (497 aa).

The interval 1 to 297 is G-domain; that stretch reads MVLAELGGRI…DAKPFVSRLL (297 aa). GTP-binding positions include 108–117, 192–196, and 250–253; these read GLQGEVLEKP, DTSGR, and TKMD. The interval 298 to 497 is M-domain; the sequence is GNGDMSGFVN…LMGMFGGRDE (200 aa).

It belongs to the GTP-binding SRP family. SRP54 subfamily. Component of a signal recognition particle (SRP) complex that consists of a 7SL RNA molecule of 300 nucleotides and six protein subunits: SRP72, SRP68, SRP54, SRP19, SRP14 and SRP9.

It is found in the cytoplasm. It localises to the endoplasmic reticulum. It carries out the reaction GTP + H2O = GDP + phosphate + H(+). Its function is as follows. Component of the signal recognition particle (SRP) complex, a ribonucleoprotein complex that mediates the cotranslational targeting of secretory and membrane proteins to the endoplasmic reticulum (ER). As part of the SRP complex, associates with the SRP receptor (SR) component SRPRA to target secretory proteins to the endoplasmic reticulum membrane. Binds to the signal sequence of presecretory proteins when they emerge from the ribosomes. Displays basal GTPase activity, and stimulates reciprocal GTPase activation of the SR subunit SRPRA. Forms a guanosine 5'-triphosphate (GTP)-dependent complex with the SR subunit SRPRA. SR compaction and GTPase mediated rearrangement of SR drive SRP-mediated cotranslational protein translocation into the ER. Requires the presence of SRP9/SRP14 and/or SRP19 to stably interact with RNA. The protein is Signal recognition particle subunit SRP54 2 (SRP-54B) of Arabidopsis thaliana (Mouse-ear cress).